We begin with the raw amino-acid sequence, 106 residues long: Putative cytochrome c oxidase subunit 7A3, mitochondrial (106 aa).

The N-terminal 23 residues, 1-23, are a transit peptide targeting the mitochondrion; the sequence is MLWNLLALHQIGQRTISTASHRH.

It belongs to the cytochrome c oxidase VIIa family.

The protein resides in the mitochondrion inner membrane. This chain is Putative cytochrome c oxidase subunit 7A3, mitochondrial (COX7A2P2), found in Homo sapiens (Human).